The chain runs to 151 residues: Ubiquitin-conjugating enzyme E2 N (151 aa).

Residues 3–149 (SLPRRIIKET…AREWTQKYAV (147 aa)) enclose the UBC core domain. Cysteine 87 serves as the catalytic Glycyl thioester intermediate.

Belongs to the ubiquitin-conjugating enzyme family.

The enzyme catalyses S-ubiquitinyl-[E1 ubiquitin-activating enzyme]-L-cysteine + [E2 ubiquitin-conjugating enzyme]-L-cysteine = [E1 ubiquitin-activating enzyme]-L-cysteine + S-ubiquitinyl-[E2 ubiquitin-conjugating enzyme]-L-cysteine.. It participates in protein modification; protein ubiquitination. Functionally, catalyzes the covalent attachment of ubiquitin to other proteins. In Drosophila melanogaster (Fruit fly), this protein is Ubiquitin-conjugating enzyme E2 N (ben).